The following is a 423-amino-acid chain: Histidine--tRNA ligase (423 aa).

Belongs to the class-II aminoacyl-tRNA synthetase family. In terms of assembly, homodimer.

It is found in the cytoplasm. The catalysed reaction is tRNA(His) + L-histidine + ATP = L-histidyl-tRNA(His) + AMP + diphosphate + H(+). This is Histidine--tRNA ligase from Rhodococcus erythropolis (strain PR4 / NBRC 100887).